Reading from the N-terminus, the 125-residue chain is Protein ApaG (125 aa).

One can recognise an ApaG domain in the interval 1–125 (MINSPRVCVQ…FRLAVPTLIH (125 aa)).

The chain is Protein ApaG from Klebsiella pneumoniae (strain 342).